A 115-amino-acid polypeptide reads, in one-letter code: Large ribosomal subunit protein bL20 (115 aa).

This sequence belongs to the bacterial ribosomal protein bL20 family.

In terms of biological role, binds directly to 23S ribosomal RNA and is necessary for the in vitro assembly process of the 50S ribosomal subunit. It is not involved in the protein synthesizing functions of that subunit. The chain is Large ribosomal subunit protein bL20 from Prochlorococcus marinus (strain MIT 9312).